A 66-amino-acid chain; its full sequence is Large ribosomal subunit protein bL35 (66 aa).

The protein belongs to the bacterial ribosomal protein bL35 family.

The chain is Large ribosomal subunit protein bL35 from Rhodopseudomonas palustris (strain BisB18).